The sequence spans 586 residues: MSRRLLPRAEKRRRRLEQRQQPDEQLRRAGAMVKMAAAGGGGGGGRYYGGGNEGGRAPKRLKTENAGDQHGGGGGGGSGAAGGGGGENYDDPHKTPASPVVHIRGLIDGVVEADLVEALQEFGPISYVVVMPKKRQALVEFEDVLGACNAVNYAADNQIYIAGHPAFVNYSTSQKISRPGDSDDSRSVNSVLLFTILNPIYSITTDVLYTICNPCGPVQRIVIFRKNGVQAMVEFDSVQSAQRAKASLNGADIYSGCCTLKIEYAKPTRLNVFKNDQDTWDYTNPNLSGQGDPGSNPNKRQRQPPLLGDHPAEYGGPHGGYHSHYHDEGYGPPPPHYEGRRMGPPVGGHRRGPSRYGPQYGHPPPPPPPPDYGPHADSPVLMVYGLDQSKMNCDRVFNVFCLYGNVEKVKFMKSKPGAAMVEMADGYAVDRAITHLNNNFMFGQKMNVCVSKQPAIMPGQSYGLEDGSCSYKDFSESRNNRFSTPEQAAKNRIQHPSNVLHFFNAPLEVTEENFFEICDELGVKRPTSVKVFSGKSERSSSGLLEWDSKSDALETLGFLNHYQMKNPNGPYPYTLKLCFSTAQHAS.

Basic residues predominate over residues 1 to 16; that stretch reads MSRRLLPRAEKRRRRL. A disordered region spans residues 1 to 97; the sequence is MSRRLLPRAE…NYDDPHKTPA (97 aa). Residues 17–27 are compositionally biased toward basic and acidic residues; it reads EQRQQPDEQLR. Residues 28-37 show a composition bias toward low complexity; it reads RAGAMVKMAA. A compositionally biased stretch (gly residues) spans 38-54; it reads AGGGGGGGRYYGGGNEG. Residues Lys59 and Lys62 each participate in a glycyl lysine isopeptide (Lys-Gly) (interchain with G-Cter in SUMO2) cross-link. Residues 69 to 87 show a composition bias toward gly residues; sequence QHGGGGGGGSGAAGGGGGE. Phosphoserine is present on Ser98. The RRM 1 domain occupies 99–173; sequence PVVHIRGLID…HPAFVNYSTS (75 aa). Lys133 participates in a covalent cross-link: Glycyl lysine isopeptide (Lys-Gly) (interchain with G-Cter in SUMO2). Ser182 carries the post-translational modification Phosphoserine. The RRM 2 domain maps to 190-267; it reads SVLLFTILNP…CTLKIEYAKP (78 aa). At Lys266 the chain carries N6-acetyllysine. The segment covering 281–298 has biased composition (polar residues); the sequence is DYTNPNLSGQGDPGSNPN. The interval 281-376 is disordered; sequence DYTNPNLSGQ…PPPPDYGPHA (96 aa). Residues Ser288 and Ser295 each carry the phosphoserine modification. Lys299 participates in a covalent cross-link: Glycyl lysine isopeptide (Lys-Gly) (interchain with G-Cter in SUMO2). Asymmetric dimethylarginine occurs at positions 351 and 355. Residues 361–372 are compositionally biased toward pro residues; sequence GHPPPPPPPPDY. Ser378 carries the post-translational modification Phosphoserine. 2 consecutive RRM domains span residues 379–476 and 492–580; these read PVLM…DFSE and RIQH…LCFS. At Ser541 the chain carries Phosphoserine; by CaMK4. A Glycyl lysine isopeptide (Lys-Gly) (interchain with G-Cter in SUMO2) cross-link involves residue Lys565.

As to quaternary structure, identified in a IGF2BP1-dependent mRNP granule complex containing untranslated mRNAs. Interacts with HNRNPLL. Interacts with APEX1; the interaction is DNA-dependent. Component of a complex with SETD2. Interacts with ELAVL1. Part of a transcription inhibitory ribonucleoprotein complex composed at least of the circular RNA circZNF827, ZNF827 and HNRNPK. Interacts with CHD8 in an RNA-dependent manner. Post-translationally, phosphorylation at Ser-541 by CaMK4 enhances interaction with a CaMK4-responsive RNA element (CaRRE1), and prevents inclusion of the stress axis-regulated exon (STREX) of the KCNMA1 potassium channel transcripts upon membrane depolarization. As to expression, detected in hematopoietic cells, including lymphoid progenitor cells.

Its subcellular location is the nucleus. The protein localises to the nucleoplasm. The protein resides in the cytoplasm. Functionally, splicing factor binding to exonic or intronic sites and acting as either an activator or repressor of exon inclusion. Exhibits a binding preference for CA-rich elements. Component of the heterogeneous nuclear ribonucleoprotein (hnRNP) complexes and associated with most nascent transcripts. Associates, together with APEX1, to the negative calcium responsive element (nCaRE) B2 of the APEX2 promoter. As part of a ribonucleoprotein complex composed at least of ZNF827, HNRNPK and the circular RNA circZNF827 that nucleates the complex on chromatin, may negatively regulate the transcription of genes involved in neuronal differentiation. Regulates alternative splicing of a core group of genes involved in neuronal differentiation, likely by mediating H3K36me3-coupled transcription elongation and co-transcriptional RNA processing via interaction with CHD8. This Mus musculus (Mouse) protein is Heterogeneous nuclear ribonucleoprotein L (Hnrnpl).